A 397-amino-acid polypeptide reads, in one-letter code: MDVLYSLSKTLKDARDKIVEGTLYSNVSDLIQQFNQMIITMNGNEFQTGGIGNLPIRNWSFDFGLLGTTLLNLDANYVETARNTIDYFVDFVDNVCMDEMVRESQRNGIAPQSDSLRKLSGIKFKRINFDNSSEYIENWNLQNRRQRTGFTFHKPNIFPYSASFTLNRSQPAHDNLMGTMWLNAGSEIQVAGFDYSCAINAPANTQQFEHIVQLRRVLTTATITLLPDAERFSFPRVINSADGATTWYFNPVILRPNNVEVEFLLNGQIINTYQARFGTIIARNFDTIRLSFQLMRPPNMTPAVAALFPNAQPFEHHATVGLTLRIESAVCESVLADASETMLANVTSVRQEYAIPVGPVFPPGMNWTDLITNYSPSREDNLQRVFTVASIRSMLVK.

Residues 62–73 (DFGLLGTTLLNL) form an interaction with the inner capsid protein VP2 region. His-153 provides a ligand contact to Zn(2+). Ca(2+)-binding residues include Asn-266 and Asp-286.

The protein belongs to the rotavirus VP6 family. In terms of assembly, homotrimer. Interacts with the inner capsid protein VP2. Interacts with the outer capsid glycoprotein VP7. Interacts with the outer capsid protein VP5*. Post-translationally, the N-terminus is blocked. Sumoylated with SUMO1 and SUMO2. Sumoylation of viral proteins seems to have a positive role on viral replication.

Its subcellular location is the virion. In terms of biological role, intermediate capsid protein that self assembles to form an icosahedral capsid with a T=13 symmetry, which consists of 230 trimers of VP6, with channels at each of its five-fold vertices. This capsid constitutes the middle concentric layer of the viral mature particle. The innermost VP2 capsid and the intermediate VP6 capsid remain intact following cell entry to protect the dsRNA from degradation and to prevent unfavorable antiviral responses in the host cell during all the replication cycle of the virus. Nascent transcripts are transcribed within the structural confines of this double-layered particle (DLP) and are extruded through the channels at the five-fold axes. VP6 is required for the transcription activity of the DLP. This is Intermediate capsid protein VP6 from Homo sapiens (Human).